The following is a 274-amino-acid chain: Nitrogenase iron protein (274 aa).

8 to 15 contributes to the ATP binding site; that stretch reads GKGGIGKS. Cys94 lines the [4Fe-4S] cluster pocket. Arg97 is modified (ADP-ribosylarginine; by dinitrogenase reductase ADP-ribosyltransferase). Position 131 (Cys131) interacts with [4Fe-4S] cluster.

It belongs to the NifH/BchL/ChlL family. As to quaternary structure, homodimer. Requires [4Fe-4S] cluster as cofactor. The reversible ADP-ribosylation of Arg-97 inactivates the nitrogenase reductase and regulates nitrogenase activity.

The enzyme catalyses N2 + 8 reduced [2Fe-2S]-[ferredoxin] + 16 ATP + 16 H2O = H2 + 8 oxidized [2Fe-2S]-[ferredoxin] + 2 NH4(+) + 16 ADP + 16 phosphate + 6 H(+). The key enzymatic reactions in nitrogen fixation are catalyzed by the nitrogenase complex, which has 2 components: the iron protein and the molybdenum-iron protein. This chain is Nitrogenase iron protein, found in Prosthecochloris aestuarii (strain DSM 271 / SK 413).